Here is a 419-residue protein sequence, read N- to C-terminus: Acetyl transferase GW6a (419 aa).

The N-acetyltransferase domain occupies valine 12 to proline 210. The segment at valine 44 to lysine 68 is disordered. Over residues glutamate 58–lysine 68 the composition is skewed to basic residues.

Belongs to the acetyltransferase family. Interacts (via C-terminus) with HDR3 (via N-terminus). Post-translationally, ubiquitinated at Lys-63 by HDR3. Polyubiquitination of GW6A delays its degradation by the 26S proteasome and enhances GW6A histone acetyltransferase activity. In terms of tissue distribution, expressed in roots, leaf blades, leaf sheaths, shoot apical meristem and young panicles.

The protein resides in the nucleus. In terms of biological role, possesses intrinsic histone acetyltransferase activity and acts as a positive regulator of grain weight, hull size, yield, and plant biomass. Regulates postitively grain weight and yield by enlarging spikelet hulls via increasing cell number and accelerating grain filling. In vitro, catalyzes the acetylation of histone H4 at Lys-6 (H4K5ac), Lys-13 (H4K12ac) and Lys-17 (H4K16ac). Involved in the regulation of plastochron (the time interval between leaf initiation event). The polypeptide is Acetyl transferase GW6a (Oryza sativa subsp. japonica (Rice)).